A 389-amino-acid polypeptide reads, in one-letter code: Large ribosomal subunit protein uL3 (389 aa).

The protein belongs to the universal ribosomal protein uL3 family.

The protein localises to the cytoplasm. The polypeptide is Large ribosomal subunit protein uL3 (RPL3) (Debaryomyces hansenii (strain ATCC 36239 / CBS 767 / BCRC 21394 / JCM 1990 / NBRC 0083 / IGC 2968) (Yeast)).